We begin with the raw amino-acid sequence, 387 residues long: MSVIKMTDLDLAGKRVLIRADLNVPVKEGKVTSDARIRASLPTIEIALKQGARVMVTSHLGRPTEGEYNEDFSLLPVVDYLKEKLSSPVRLAKDYLDGVDVAEGELVVLENVRFNKGEKKDDEVLSKKYAALCDVFVMDAFGTAHRAQASTHGVGKFATIACAGPLLSGELEALGKALSKPARPMVAIVGGSKVSTKLTVLDSLSKIADQLIVGGGIANTFVAAQGHNVGKSLYEADLISEAKKLLETCDIPVPSDVRVASEFSETAAATLKSVTEIKDEEQILDLGDVSAERLAEILKNAKTILWNGPVGVFEFPNFRKGTEIIARAIADSDAFSIAGGGDTLAAIDLFGIADKISYISTGGGAFLEFVEGKKLPAVVMLEERAKQ.

Substrate contacts are provided by residues 21–23 (DLN), R36, 59–62 (HLGR), R113, and R146. ATP-binding positions include K197, E314, and 340–343 (GGDT).

It belongs to the phosphoglycerate kinase family. As to quaternary structure, monomer.

It localises to the cytoplasm. The catalysed reaction is (2R)-3-phosphoglycerate + ATP = (2R)-3-phospho-glyceroyl phosphate + ADP. The protein operates within carbohydrate degradation; glycolysis; pyruvate from D-glyceraldehyde 3-phosphate: step 2/5. In Pectobacterium atrosepticum (strain SCRI 1043 / ATCC BAA-672) (Erwinia carotovora subsp. atroseptica), this protein is Phosphoglycerate kinase.